A 278-amino-acid polypeptide reads, in one-letter code: Trans-2,3-dihydro-3-hydroxyanthranilate isomerase (278 aa).

E45 is an active-site residue.

Belongs to the PhzF family.

The enzyme catalyses (5S,6S)-6-amino-5-hydroxycyclohexa-1,3-diene-1-carboxyate = (1R,6S)-6-amino-5-oxocyclohex-2-ene-1-carboxylate. It participates in secondary metabolite biosynthesis; pyocyanine biosynthesis. In terms of biological role, isomerase that catalyzes the condensation of two molecules of trans-2,3-dihydro-3-hydroxyanthranilic acid (DHHA) into the phenazine ring system. The final product is not yet known. The polypeptide is Trans-2,3-dihydro-3-hydroxyanthranilate isomerase (phzF1) (Pseudomonas aeruginosa (strain ATCC 15692 / DSM 22644 / CIP 104116 / JCM 14847 / LMG 12228 / 1C / PRS 101 / PAO1)).